The sequence spans 60 residues: Mastoparan-VT1 (60 aa).

The N-terminal stretch at 1–25 (MKNTILILFTAFIALLGFFGMSAEA) is a signal peptide. Positions 26–45 (LADLKADPLAGPNPDADPEA) are excised as a propeptide. AXPX repeat units lie at residues 31-34 (ADPL), 35-38 (AGPN), and 41-44 (ADPE). At Leu59 the chain carries Leucine amide.

It belongs to the MCD family. Mastoparan subfamily. In terms of tissue distribution, expressed by the venom gland.

Its subcellular location is the secreted. Its function is as follows. Antimicrobial peptide with activities against Gram-negative and Gram-positive bacteria and the fungi C.albicans and C.parapsilosis. Exhibits little hemolytic activity against washed human erythrocytes. Also acts as a mast cell degranulating peptide. Its mast cell degranulation activity may be related to the activation of G-protein coupled receptors in mast cells as well as interaction with other proteins located in cell endosomal membranes in the mast cells. Antimicrobial peptide with activities against Gram-negative and Gram-positive bacteria and the fungi C.albicans and C.parapsilosis. Exhibits little hemolytic activity against washed human erythrocytes. Also acts as a mast cell degranulating peptide. This Vespa tropica (Greater banded hornet) protein is Mastoparan-VT1.